A 252-amino-acid chain; its full sequence is D-aminoacyl-tRNA deacylase (252 aa).

The protein belongs to the DtdA deacylase family. In terms of assembly, monomer. Zn(2+) is required as a cofactor.

It carries out the reaction a D-aminoacyl-tRNA + H2O = a tRNA + a D-alpha-amino acid + H(+). The enzyme catalyses glycyl-tRNA(Ala) + H2O = tRNA(Ala) + glycine + H(+). In terms of biological role, D-aminoacyl-tRNA deacylase with broad substrate specificity. By recycling D-aminoacyl-tRNA to D-amino acids and free tRNA molecules, this enzyme counteracts the toxicity associated with the formation of D-aminoacyl-tRNA entities in vivo. In Pyrobaculum islandicum (strain DSM 4184 / JCM 9189 / GEO3), this protein is D-aminoacyl-tRNA deacylase.